We begin with the raw amino-acid sequence, 611 residues long: Chaperone protein HtpG (611 aa).

The a; substrate-binding stretch occupies residues Met1–Arg326. The tract at residues Glu327–Arg536 is b. Residues Leu537–Gly611 are c.

This sequence belongs to the heat shock protein 90 family. Homodimer.

The protein localises to the cytoplasm. In terms of biological role, molecular chaperone. Has ATPase activity. This Methylobacterium nodulans (strain LMG 21967 / CNCM I-2342 / ORS 2060) protein is Chaperone protein HtpG.